The following is an 822-amino-acid chain: DNA gyrase subunit A (822 aa).

The Topo IIA-type catalytic domain occupies 32-497 (LPDVRDGLKP…QVLSLEDEDL (466 aa)). Tyr-120 serves as the catalytic O-(5'-phospho-DNA)-tyrosine intermediate. A GyrA-box motif is present at residues 524-530 (QKRGGRG).

The protein belongs to the type II topoisomerase GyrA/ParC subunit family. As to quaternary structure, heterotetramer, composed of two GyrA and two GyrB chains. In the heterotetramer, GyrA contains the active site tyrosine that forms a transient covalent intermediate with DNA, while GyrB binds cofactors and catalyzes ATP hydrolysis.

Its subcellular location is the cytoplasm. The catalysed reaction is ATP-dependent breakage, passage and rejoining of double-stranded DNA.. Functionally, a type II topoisomerase that negatively supercoils closed circular double-stranded (ds) DNA in an ATP-dependent manner to modulate DNA topology and maintain chromosomes in an underwound state. Negative supercoiling favors strand separation, and DNA replication, transcription, recombination and repair, all of which involve strand separation. Also able to catalyze the interconversion of other topological isomers of dsDNA rings, including catenanes and knotted rings. Type II topoisomerases break and join 2 DNA strands simultaneously in an ATP-dependent manner. This is DNA gyrase subunit A from Streptococcus pneumoniae serotype 4 (strain ATCC BAA-334 / TIGR4).